The primary structure comprises 250 residues: Probable transcriptional regulatory protein Cphamn1_0542 (250 aa).

It belongs to the TACO1 family.

The protein resides in the cytoplasm. The sequence is that of Probable transcriptional regulatory protein Cphamn1_0542 from Chlorobium phaeobacteroides (strain BS1).